Here is a 560-residue protein sequence, read N- to C-terminus: Secreted RxLR effector protein 142 (560 aa).

The signal sequence occupies residues 1-22 (MRRAYFVAIALLVAAGGKTAAG). 2 disordered regions span residues 48–73 (QSQN…ERTP) and 354–377 (INRP…LNNQ). Over residues 54–72 (ESRDPKDDLKLSAGNEERT) the composition is skewed to basic and acidic residues. Residues 56–71 (RDPKDDLKLSAGNEER) carry the RxLR-dEER motif. The segment covering 361–377 (GPSTNGATTSNGGLNNQ) has biased composition (polar residues).

This sequence belongs to the RxLR effector family.

The protein resides in the secreted. It is found in the host nucleus. Its function is as follows. Secreted effector that completely suppresses the host cell death induced by cell death-inducing proteins. The polypeptide is Secreted RxLR effector protein 142 (Plasmopara viticola (Downy mildew of grapevine)).